Consider the following 326-residue polypeptide: Serine hydrolase-like protein (326 aa).

The AB hydrolase-1 domain maps to 44-155 (PVLCLHGWAD…FLPTEVTDMF (112 aa)). S118 is a catalytic residue.

This sequence belongs to the AB hydrolase superfamily.

Its function is as follows. Probable serine hydrolase. The protein is Serine hydrolase-like protein (serhl) of Danio rerio (Zebrafish).